The chain runs to 335 residues: MSFFQYKNYIEEGDLVLAYISRSTIKPINVKKGEIFNTRYGHFEHDKMIGMKYGEQMPGAKGYGFIHLLHPTPELWTLSLPHRTQIVYSPDSSYIIQRLNVKPGSRVIEAGTGSASFTHSFARTVTLSGKVFTYEFHEPRYLEAKKELEEHKLDNTTITHRDVCNDGFSIDNESIEGDVVFLDLPSPWDAIPHLDSVISTSKAAGICCFSPCIEQVDRTVRALEENGWTEIEIVEVAAKRWSARKEMVRSVADAVQRIREIQNGRKTGLEVMKKGPSEEPPAKLQKTDNGYKTPKKSTKVKEGDENYTWLNATKSESEIKSHTSYLTFACKIPKQ.

Residues 114–116 (SAS), Glu135, Arg140, 162–163 (DV), and Asp183 contribute to the S-adenosyl-L-methionine site. Positions 271-281 (VMKKGPSEEPP) are enriched in basic and acidic residues. The disordered stretch occupies residues 271-302 (VMKKGPSEEPPAKLQKTDNGYKTPKKSTKVKE).

The protein belongs to the class I-like SAM-binding methyltransferase superfamily. TRM61 family. In terms of assembly, heterotetramer; composed of two copies of TRM6 and two copies of TRM61.

It is found in the nucleus. The enzyme catalyses adenosine(58) in tRNA + S-adenosyl-L-methionine = N(1)-methyladenosine(58) in tRNA + S-adenosyl-L-homocysteine + H(+). Its function is as follows. Catalytic subunit of tRNA (adenine-N(1)-)-methyltransferase, which catalyzes the formation of N(1)-methyladenine at position 58 (m1A58) in initiator methionyl-tRNA. The protein is tRNA (adenine(58)-N(1))-methyltransferase catalytic subunit TRM61 (TRM61) of Candida albicans (strain SC5314 / ATCC MYA-2876) (Yeast).